Reading from the N-terminus, the 980-residue chain is BEM1-interacting protein 1 (980 aa).

Positions 13 to 77 (KSFPLYIAVN…PAVFTKRIAI (65 aa)) constitute an SH3 domain. Phosphoserine is present on residues Ser-104, Ser-106, and Ser-128. Residues 139 to 163 (SGSVEQEVSKSPTRVPEVSTPQLQD) are disordered. The span at 141 to 150 (SVEQEVSKSP) shows a compositional bias: polar residues. Phosphothreonine is present on residues Thr-151 and Thr-158. At Ser-209 the chain carries Phosphoserine. The SAM domain occupies 228–292 (WSPEEVTDYF…FKEIRNIKSA (65 aa)). 2 disordered regions span residues 333-356 (SKCNKLSSESSDRKSSSVTTELQR) and 390-438 (IFES…KNKN). Phosphoserine is present on residues Ser-393 and Ser-412. A compositionally biased stretch (pro residues) spans 397 to 412 (APKPPSYPSPVQPPQS). Over residues 415–438 (FNNRYTNNNARFPPQTTYPPKNKN) the composition is skewed to polar residues. Ser-525 and Ser-528 each carry phosphoserine. Residues 544–762 (SSFDEEETKQ…AKKQQTSAFT (219 aa)) are disordered. A compositionally biased stretch (basic and acidic residues) spans 573–582 (HSRDASLSEM). Ser-589, Ser-590, and Ser-593 each carry phosphoserine. Composition is skewed to low complexity over residues 589–608 (SSILSFFSSKSQSNPTSPTK) and 621–638 (HSRSQSNSYSHARSQSYS). A phosphoserine mark is found at Ser-644 and Ser-655. Polar residues-rich tracts occupy residues 645–662 (LVTSPLKTSLSPINSKSN) and 669–683 (ETPTSSNNKEAVSQP). Residues 687–703 (KHKHKHKHKSKHKHKNS) are compositionally biased toward basic residues. Ser-735 carries the phosphoserine modification. Polar residues predominate over residues 737 to 746 (SELTQKSTKS). A PH domain is found at 776-895 (TADCSGWMSK…WLSAIIKATI (120 aa)). At Thr-919 the chain carries Phosphothreonine. A disordered region spans residues 930-980 (LRDAEEEEGRDQFGWDDTQNKRNSNYPIEQDQFETSDYLESSAFEYPGGRL). Positions 950 to 968 (KRNSNYPIEQDQFETSDYL) are enriched in polar residues.

Interacts with BEM1.

It is found in the bud. The protein resides in the bud neck. Functionally, functions redundantly with BOI2 to promote the fusion of secretory vesicles with the plasma membrane at sites of polarized growth. This chain is BEM1-interacting protein 1, found in Saccharomyces cerevisiae (strain ATCC 204508 / S288c) (Baker's yeast).